A 68-amino-acid chain; its full sequence is Translational regulator CsrA 1 (68 aa).

This sequence belongs to the CsrA/RsmA family. Homodimer; the beta-strands of each monomer intercalate to form a hydrophobic core, while the alpha-helices form wings that extend away from the core.

The protein resides in the cytoplasm. Functionally, a key translational regulator that binds mRNA to regulate translation initiation and/or mRNA stability. Mediates global changes in gene expression, shifting from rapid growth to stress survival by linking envelope stress, the stringent response and the catabolite repression systems. Usually binds in the 5'-UTR; binding at or near the Shine-Dalgarno sequence prevents ribosome-binding, repressing translation, binding elsewhere in the 5'-UTR can activate translation and/or stabilize the mRNA. Its function is antagonized by small RNA(s). The polypeptide is Translational regulator CsrA 1 (Coxiella burnetii (strain RSA 493 / Nine Mile phase I)).